The primary structure comprises 481 residues: UDP-N-acetylmuramoylalanine--D-glutamate ligase (481 aa).

Position 108 to 114 (108 to 114 (GTNGKTS)) interacts with ATP.

Belongs to the MurCDEF family.

It is found in the cytoplasm. The catalysed reaction is UDP-N-acetyl-alpha-D-muramoyl-L-alanine + D-glutamate + ATP = UDP-N-acetyl-alpha-D-muramoyl-L-alanyl-D-glutamate + ADP + phosphate + H(+). It functions in the pathway cell wall biogenesis; peptidoglycan biosynthesis. Its function is as follows. Cell wall formation. Catalyzes the addition of glutamate to the nucleotide precursor UDP-N-acetylmuramoyl-L-alanine (UMA). The protein is UDP-N-acetylmuramoylalanine--D-glutamate ligase of Bifidobacterium longum subsp. infantis (strain ATCC 15697 / DSM 20088 / JCM 1222 / NCTC 11817 / S12).